A 604-amino-acid chain; its full sequence is Numb-like protein (604 aa).

4 disordered regions span residues 1–68, 223–283, 372–457, and 531–604; these read MSRS…QWQA, GSFR…PVAA, ASAG…TLQP, and KAGA…EIEL. The PID domain maps to 74-225; it reads RKGTCSFPVR…RTSFAREGSF (152 aa). Phosphoserine is present on residues serine 224 and serine 228. The span at 233-245 shows a compositional bias: basic and acidic residues; that stretch reads PAEREAGDKKKAE. Over residues 246 to 260 the composition is skewed to low complexity; sequence AAAAPAVAPGPAQPG. Phosphoserine is present on serine 263. Residue threonine 279 is modified to Phosphothreonine. The span at 409–418 shows a compositional bias: basic and acidic residues; sequence TPSEAERWLE. At serine 411 the chain carries Phosphoserine. 2 stretches are compositionally biased toward low complexity: residues 427–441 and 542–552; these read QQQQQQQQQQQQQQQ and SAPGGQARPRP. Pro residues predominate over residues 553-568; it reads NGAPWPPEPAPAPAPE.

Interacts (via PTB domain) with MAP3K7IP2 (via C-terminal). Interacts (via C-terminal) with TRAF6 (via TRAF domains). Associates with EPS15 and NOTCH1. Preferentially expressed in the nervous system. In the developing neocortex, expressed in postmitotic neurons in the cortical plate but not in progenitors within the ventricular zone.

It is found in the cytoplasm. Its function is as follows. Plays a role in the process of neurogenesis. Required throughout embryonic neurogenesis to maintain neural progenitor cells, also called radial glial cells (RGCs), by allowing their daughter cells to choose progenitor over neuronal cell fate. Not required for the proliferation of neural progenitor cells before the onset of embryonic neurogenesis. Also required postnatally in the subventricular zone (SVZ) neurogenesis by regulating SVZ neuroblasts survival and ependymal wall integrity. Negative regulator of NF-kappa-B signaling pathway. The inhibition of NF-kappa-B activation is mediated at least in part, by preventing MAP3K7IP2 to interact with polyubiquitin chains of TRAF6 and RIPK1 and by stimulating the 'Lys-48'-linked polyubiquitination and degradation of TRAF6 in cortical neurons. The protein is Numb-like protein (Numbl) of Mus musculus (Mouse).